Here is a 548-residue protein sequence, read N- to C-terminus: Protoporphyrinogen oxidase, chloroplastic (548 aa).

Residues 1–50 (MTTTPIANHPNIFTHQSSSSPLAFLNRTSFIPFSSISKRNSVNCNGWRTR) constitute a chloroplast transit peptide. Residues 78–83 (GAGISG), 101–102 (EA), and 123–126 (GPNS) contribute to the FAD site. The span at 265–279 (KERSSTPKAPRDPRL) shows a compositional bias: basic and acidic residues. Residues 265–287 (KERSSTPKAPRDPRLPKPKGQTV) form a disordered region. Residue 522-524 (VAL) participates in FAD binding.

The protein belongs to the protoporphyrinogen/coproporphyrinogen oxidase family. Protoporphyrinogen oxidase subfamily. As to quaternary structure, homodimer. FAD serves as cofactor.

The protein resides in the plastid. It localises to the chloroplast. It carries out the reaction protoporphyrinogen IX + 3 O2 = protoporphyrin IX + 3 H2O2. It functions in the pathway porphyrin-containing compound metabolism; protoporphyrin-IX biosynthesis; protoporphyrin-IX from protoporphyrinogen-IX: step 1/1. It participates in porphyrin-containing compound metabolism; chlorophyll biosynthesis. In terms of biological role, catalyzes the 6-electron oxidation of protoporphyrinogen-IX to form protoporphyrin-IX. The chain is Protoporphyrinogen oxidase, chloroplastic (PPXI) from Nicotiana tabacum (Common tobacco).